A 439-amino-acid chain; its full sequence is Protease Do-like 1, chloroplastic (439 aa).

Positions 154-323 (QGSGSGFVWD…IPVDTVGGIV (170 aa)) are serine protease. Catalysis depends on charge relay system residues histidine 173, aspartate 203, and serine 282. The 98-residue stretch at 326–423 (LVRFGKVTRP…EVTVEVLRGD (98 aa)) folds into the PDZ domain.

This sequence belongs to the peptidase S1C family. In terms of assembly, interacts with PTAC16 and other potential targets for degradation under high light conditions.

The protein resides in the plastid. Its subcellular location is the chloroplast thylakoid membrane. Its activity is regulated as follows. Inhibited by phenylmethylsulfonyl fluoride and O-phenanthroline. Its function is as follows. Serine protease that is required at high temperature. May be involved in the degradation of damaged proteins. In vivo, can degrade beta-casein. This is Protease Do-like 1, chloroplastic (DEGP1) from Arabidopsis thaliana (Mouse-ear cress).